The chain runs to 346 residues: Large ribosomal subunit protein uL10 (346 aa).

A disordered region spans residues 307 to 346; the sequence is AAAVAKEPEKKEEVKEEEEEEEEEDHSEEDGMAGLGSLFG. Over residues 321 to 337 the composition is skewed to acidic residues; that stretch reads KEEEEEEEEEDHSEEDG.

The protein belongs to the universal ribosomal protein uL10 family. Part of the 50S ribosomal subunit. Forms part of the ribosomal stalk which helps the ribosome interact with GTP-bound translation factors. Forms both a pentameric L10(L12)2(L12)2 and heptameric L10(L12)2(L12)2(L12)2 complex, where L10 forms an elongated spine to which the L12 dimers bind in a sequential fashion. The proportion of heptameric complexes increases during cell growth.

Its function is as follows. Forms part of the ribosomal stalk, playing a central role in the interaction of the ribosome with GTP-bound translation factors. The sequence is that of Large ribosomal subunit protein uL10 from Methanosarcina barkeri (strain Fusaro / DSM 804).